Here is a 102-residue protein sequence, read N- to C-terminus: Small ribosomal subunit protein bS6 (102 aa).

The protein belongs to the bacterial ribosomal protein bS6 family.

Functionally, binds together with bS18 to 16S ribosomal RNA. This chain is Small ribosomal subunit protein bS6, found in Solidesulfovibrio magneticus (strain ATCC 700980 / DSM 13731 / RS-1) (Desulfovibrio magneticus).